We begin with the raw amino-acid sequence, 418 residues long: Actin-like protein C08B11.6 (418 aa).

This sequence belongs to the actin family. ARP6 subfamily.

The protein resides in the cytoplasm. The protein localises to the cytoskeleton. This is Actin-like protein C08B11.6 (arp-6) from Caenorhabditis elegans.